The sequence spans 377 residues: NIF3-like protein 1 (377 aa).

Lys109 bears the N6-acetyllysine mark. Residues Leu244–Val377 form a mediates interaction with COPS2 region. The residue at position 255 (Thr255) is a Phosphothreonine. Position 259 is a phosphoserine (Ser259).

The protein belongs to the GTP cyclohydrolase I type 2/NIF3 family. Homodimer. Interacts with COPS2. Interacts with THOC7.

Its subcellular location is the cytoplasm. The protein resides in the nucleus. In terms of biological role, may function as a transcriptional corepressor through its interaction with COPS2, negatively regulating the expression of genes involved in neuronal differentiation. The protein is NIF3-like protein 1 of Homo sapiens (Human).